A 44-amino-acid chain; its full sequence is Defensin-like protein 1 (44 aa).

Gln1 bears the Pyrrolidone carboxylic acid mark. Cys15 and Cys36 are joined by a disulfide.

It belongs to the DEFL family. Forms oligomers in its native state.

It is found in the secreted. Its function is as follows. Possesses antifungal activity sensitive to inorganic cations. The chain is Defensin-like protein 1 (AFP1) from Brassica napus (Rape).